Reading from the N-terminus, the 477-residue chain is Glycogen synthase (477 aa).

Residue K15 participates in ADP-alpha-D-glucose binding.

It belongs to the glycosyltransferase 1 family. Bacterial/plant glycogen synthase subfamily.

It catalyses the reaction [(1-&gt;4)-alpha-D-glucosyl](n) + ADP-alpha-D-glucose = [(1-&gt;4)-alpha-D-glucosyl](n+1) + ADP + H(+). It functions in the pathway glycan biosynthesis; glycogen biosynthesis. Functionally, synthesizes alpha-1,4-glucan chains using ADP-glucose. The protein is Glycogen synthase of Escherichia fergusonii (strain ATCC 35469 / DSM 13698 / CCUG 18766 / IAM 14443 / JCM 21226 / LMG 7866 / NBRC 102419 / NCTC 12128 / CDC 0568-73).